We begin with the raw amino-acid sequence, 325 residues long: Homeobox protein Hox-A1a (325 aa).

An Antp-type hexapeptide motif is present at residues T187–K192. 2 disordered regions span residues K194–V215 and R264–N325. The homeobox DNA-binding region spans P212–E271. Over residues S285–K300 the composition is skewed to basic and acidic residues. The span at S301–S317 shows a compositional bias: low complexity.

This sequence belongs to the Antp homeobox family. Labial subfamily.

It is found in the nucleus. Functionally, sequence-specific transcription factor which is part of a developmental regulatory system that provides cells with specific positional identities on the anterior-posterior axis. This chain is Homeobox protein Hox-A1a (hoxa1a), found in Takifugu rubripes (Japanese pufferfish).